The following is a 112-amino-acid chain: Putative regulatory protein DP2861 (112 aa).

This sequence belongs to the RemA family.

The polypeptide is Putative regulatory protein DP2861 (Desulfotalea psychrophila (strain LSv54 / DSM 12343)).